We begin with the raw amino-acid sequence, 325 residues long: Mitochondrial thiamine pyrophosphate carrier 1 (325 aa).

Solcar repeat units lie at residues 12–111 (GSRL…TTLL), 122–209 (PPSA…LRPH), and 216–312 (PFSS…ALKF). A run of 6 helical transmembrane segments spans residues 17–35 (VTAA…IAPL), 92–108 (LLYV…YRTT), 127–143 (SFVA…AATY), 184–200 (VWDR…SFFF), 223–239 (VART…TFPL), and 287–304 (GLTV…VTMW).

The protein belongs to the mitochondrial carrier (TC 2.A.29) family.

The protein resides in the mitochondrion inner membrane. Functionally, mitochondrial transporter that mediates uptake of thiamine pyrophosphate (ThPP) into mitochondria. This is Mitochondrial thiamine pyrophosphate carrier 1 (TPC1) from Chaetomium globosum (strain ATCC 6205 / CBS 148.51 / DSM 1962 / NBRC 6347 / NRRL 1970) (Soil fungus).